A 280-amino-acid chain; its full sequence is Large ribosomal subunit protein uL2 (280 aa).

Positions 226 to 280 (NPIDHPHGGGEGRTSGGRHPVTPWGKPTKGAKTRNKKKASSQLIIRSRHAKKKGR) are disordered. Composition is skewed to basic residues over residues 254-264 (KGAKTRNKKKA) and 271-280 (RSRHAKKKGR).

This sequence belongs to the universal ribosomal protein uL2 family. Part of the 50S ribosomal subunit. Forms a bridge to the 30S subunit in the 70S ribosome.

In terms of biological role, one of the primary rRNA binding proteins. Required for association of the 30S and 50S subunits to form the 70S ribosome, for tRNA binding and peptide bond formation. It has been suggested to have peptidyltransferase activity; this is somewhat controversial. Makes several contacts with the 16S rRNA in the 70S ribosome. The chain is Large ribosomal subunit protein uL2 from Roseobacter denitrificans (strain ATCC 33942 / OCh 114) (Erythrobacter sp. (strain OCh 114)).